A 570-amino-acid polypeptide reads, in one-letter code: Set1/Ash2 histone methyltransferase complex subunit ash-2 (570 aa).

The PHD-type zinc-finger motif lies at 19–76; that stretch reads TTVCYCDGKRELGSVEVVCSTCLKWFHGRCLKEFHELNSNGVPFMICYTFTCKQCRPT. The interval 201–242 is disordered; the sequence is NREPRHIELPPIEGPKTRGASKRRHAEAPVTGKKQKLAADYS. The 199-residue stretch at 270–468 folds into the B30.2/SPRY domain; it reads PNVPEDPAWN…TLVEMPGSYI (199 aa).

In terms of assembly, component of the SET2 complex (also known as the SET1/COMPASS complex), which contains at least set-2, swd-2.1, cfp-1, rbbp-5, wdr-5.1, dpy-30 and ash-2. Within the complex, interacts with cfp-1 and wdr-5.1. Expressed in somatic and germline tissues (at protein level).

The protein resides in the nucleus. In terms of biological role, component of the set-2/ash-2 histone methyltransferase (HMT) complex. Required for the di- and trimethylation at 'Lys-4' of histone H3, a mark associated with epigenetic transcriptional activation. Implicated in the epigenetic inheritance of lifespan over several generations. Functions as a transcriptional regulator. Acts in the germline to limit the longevity of the soma, probably by regulating a lipid metabolism pathway that signals from the germline to the intestine, thereby preventing accumulation of mono-unsaturated fatty acids. This chain is Set1/Ash2 histone methyltransferase complex subunit ash-2, found in Caenorhabditis elegans.